A 204-amino-acid chain; its full sequence is MATTSSNVENFSPQIIKQVAREIHGLTNDPPEGIKVFSNDEDITDIQASIEGPTGTPYEGGIFKIKLVLGKDFPAAPPKGFFLTKIFHPNVAKNGEICVNTLKKDWKPDLGIKQVLLTVKCLLIVPNPESALNEEAGKLLLERYDDYSKRAKMFTEIHAKLSASSSNNISEGQQESLPGKKRVAVNEKMCDKKKKDKKRALKRL.

Positions 14–160 constitute a UBC core domain; the sequence is QIIKQVAREI…AKMFTEIHAK (147 aa). Residue cysteine 98 is the Glycyl thioester intermediate of the active site. Positions 165–176 are enriched in polar residues; it reads SSNNISEGQQES. The interval 165–204 is disordered; sequence SSNNISEGQQESLPGKKRVAVNEKMCDKKKKDKKRALKRL. A compositionally biased stretch (basic residues) spans 191–204; that stretch reads DKKKKDKKRALKRL.

Belongs to the ubiquitin-conjugating enzyme family.

It carries out the reaction S-ubiquitinyl-[E1 ubiquitin-activating enzyme]-L-cysteine + [E2 ubiquitin-conjugating enzyme]-L-cysteine = [E1 ubiquitin-activating enzyme]-L-cysteine + S-ubiquitinyl-[E2 ubiquitin-conjugating enzyme]-L-cysteine.. It participates in protein modification; protein ubiquitination. Its function is as follows. Catalyzes the covalent attachment of ubiquitin to other proteins. Acts as an essential factor of the anaphase promoting complex/cyclosome (APC/C), a cell cycle-regulated ubiquitin ligase that controls progression through mitosis. Acts by specifically elongating polyubiquitin chains initiated by the E2 enzyme UBCH10 on APC/C substrates, enhancing the degradation of APC/C substrates by the proteasome and promoting mitotic exit. This Nematostella vectensis (Starlet sea anemone) protein is Ubiquitin-conjugating enzyme E2 S.